The following is a 248-amino-acid chain: MENFKGLQKSLYIWTDSADLDKRVEQLKAATGGDVALENVHRLSFSSYANSSFDLIVIECAQLTDSYVKLLHMLKPSGKLHLVSYIGPAASLLQEIKLSGFINCREDSPDALTAEKPGYETGSSARLSFAKKNASAVNVWKISGDDEELIDEEELLDEEDKQKPDPAGLRVCSTTGKRKACKNCSCGLAEELETEKQSQKATENAKSSCGNCYLGDAFRCSTCPYLGMPAFKPGEKVQLADNLLKSDI.

Residues 4–129 are N-terminal SAM-like domain; that stretch reads FKGLQKSLYI…ETGSSARLSF (126 aa). Positions 130-161 are linker; it reads AKKNASAVNVWKISGDDEELIDEEELLDEEDK. The [2Fe-2S] cluster site is built by Cys172, Cys181, Cys184, and Cys186. Residues 172 to 186 form a fe-S binding site A region; the sequence is CSTTGKRKACKNCSC. Residues Cys209, Cys212, Cys220, and Cys223 each contribute to the [4Fe-4S] cluster site. Short sequence motifs (cx2C motif) lie at residues 209–212 and 220–223; these read CGNC and CSTC. Residues 209-223 form a fe-S binding site B region; the sequence is CGNCYLGDAFRCSTC.

It belongs to the anamorsin family. In terms of assembly, monomer. It depends on [2Fe-2S] cluster as a cofactor. The cofactor is [4Fe-4S] cluster.

It is found in the cytoplasm. The protein localises to the mitochondrion intermembrane space. Its function is as follows. Component of the cytosolic iron-sulfur (Fe-S) protein assembly (CIA) machinery. Required for the maturation of extramitochondrial Fe-S proteins. Part of an electron transfer chain functioning in an early step of cytosolic Fe-S biogenesis, facilitating the de novo assembly of a [4Fe-4S] cluster on the cytosolic Fe-S scaffold complex. Electrons are transferred from NADPH via a FAD- and FMN-containing diflavin oxidoreductase. Together with the diflavin oxidoreductase, also required for the assembly of the diferric tyrosyl radical cofactor of ribonucleotide reductase (RNR), probably by providing electrons for reduction during radical cofactor maturation in the catalytic small subunit. The chain is Anamorsin homolog from Drosophila melanogaster (Fruit fly).